The sequence spans 68 residues: Protein SlyX homolog (68 aa).

The protein belongs to the SlyX family.

This is Protein SlyX homolog from Ectopseudomonas mendocina (strain ymp) (Pseudomonas mendocina).